A 546-amino-acid chain; its full sequence is Nuclear pore complex protein Nup58 (546 aa).

Tandem repeats lie at residues 22–23, 36–37, 45–46, 64–65, 73–74, 82–83, 92–93, 101–102, 110–111, 119–120, 128–129, 137–138, 146–147, 155–156, 166–167, 197–198, and 199–200. The segment at 22-200 is 17 X 2 AA repeats of F-G; the sequence is FGARPATTTA…TTAPPAFGFG (179 aa).

The protein belongs to the NUP58 family. In terms of assembly, component of the nuclear pore complex. Interacts with Nup54. Interacts (via C-terminus) with fs(1)Yb; this interaction occurs in a RNA-independent manner. Interacts with sbr/nxf1. Interacts with Nxt1. O-glycosylated; contains O-GlcNAc. O-GlcNAcylation increases with increasing ambient temperature.

It localises to the nucleus. The protein localises to the nuclear pore complex. Functionally, component of the nuclear pore complex, a complex required for the trafficking across the nuclear membrane. Together with Nup54, required for transposable element silencing regulation in ovarian follicle cells. By interacting with the nuclear (Nxf1/Nxt1) and cytosolic (fs(1)Yb) components of the flamenco (flam) transcripts processing pathway, enables export and subsequent piRNA production. This is Nuclear pore complex protein Nup58 from Drosophila melanogaster (Fruit fly).